The primary structure comprises 188 residues: Chitin synthase 2 (188 aa).

Belongs to the chitin synthase family.

The protein resides in the cell membrane. It carries out the reaction [(1-&gt;4)-N-acetyl-beta-D-glucosaminyl](n) + UDP-N-acetyl-alpha-D-glucosamine = [(1-&gt;4)-N-acetyl-beta-D-glucosaminyl](n+1) + UDP + H(+). In terms of biological role, polymerizes chitin, a structural polymer of the cell wall and septum, by transferring the sugar moiety of UDP-GlcNAc to the non-reducing end of the growing chitin polymer. The protein is Chitin synthase 2 (CHS2) of Exophiala jeanselmei (Dematiaceous fungus).